The primary structure comprises 31 residues: Cytochrome b6-f complex subunit 6 (31 aa).

The chain crosses the membrane as a helical span at residues 4-24; that stretch reads LTSYFGFLLAALTITPALFIG.

Belongs to the PetL family. As to quaternary structure, the 4 large subunits of the cytochrome b6-f complex are cytochrome b6, subunit IV (17 kDa polypeptide, PetD), cytochrome f and the Rieske protein, while the 4 small subunits are PetG, PetL, PetM and PetN. The complex functions as a dimer.

The protein localises to the plastid. The protein resides in the chloroplast thylakoid membrane. Its function is as follows. Component of the cytochrome b6-f complex, which mediates electron transfer between photosystem II (PSII) and photosystem I (PSI), cyclic electron flow around PSI, and state transitions. PetL is important for photoautotrophic growth as well as for electron transfer efficiency and stability of the cytochrome b6-f complex. This Agrostis stolonifera (Creeping bentgrass) protein is Cytochrome b6-f complex subunit 6.